Here is a 101-residue protein sequence, read N- to C-terminus: NAD(P)H-quinone oxidoreductase subunit 4L, chloroplastic (101 aa).

The next 3 membrane-spanning stretches (helical) occupy residues 2–22, 32–52, and 61–81; these read MLEHIPVLSAYLFSIDIYGLI, MCLELILNAVNINFVTFSDFF, and IFSIFVIAIAAAEAAIGSAIV.

This sequence belongs to the complex I subunit 4L family. NDH is composed of at least 16 different subunits, 5 of which are encoded in the nucleus.

The protein localises to the plastid. It localises to the chloroplast thylakoid membrane. It carries out the reaction a plastoquinone + NADH + (n+1) H(+)(in) = a plastoquinol + NAD(+) + n H(+)(out). The enzyme catalyses a plastoquinone + NADPH + (n+1) H(+)(in) = a plastoquinol + NADP(+) + n H(+)(out). Functionally, NDH shuttles electrons from NAD(P)H:plastoquinone, via FMN and iron-sulfur (Fe-S) centers, to quinones in the photosynthetic chain and possibly in a chloroplast respiratory chain. The immediate electron acceptor for the enzyme in this species is believed to be plastoquinone. Couples the redox reaction to proton translocation, and thus conserves the redox energy in a proton gradient. This chain is NAD(P)H-quinone oxidoreductase subunit 4L, chloroplastic, found in Gossypium barbadense (Sea Island cotton).